The following is a 315-amino-acid chain: Olfactory receptor 3A1 (315 aa).

Over 1 to 28 (MQPESGANGTVIAEFILLGLLEAPGLQP) the chain is Extracellular. N-linked (GlcNAc...) asparagine glycosylation occurs at N8. A helical transmembrane segment spans residues 29 to 52 (VVFVLFLFAYLVTVGGNLSILAAV). At 53–60 (LVEPKLHS) the chain is on the cytoplasmic side. Residues 61-82 (PMYFFLGNLSVLDVGCISVTVP) traverse the membrane as a helical segment. The Extracellular portion of the chain corresponds to 83 to 103 (SMLSRLLSRKRAVPCGACLTQ). C100 and C192 form a disulfide bridge. Residues 104 to 123 (LFFFHLFVGVDCFLLTAMAY) traverse the membrane as a helical segment. At 124–143 (DRFLAICRPLTYSTRMSQTV) the chain is on the cytoplasmic side. A helical membrane pass occupies residues 144 to 161 (QRMLVAASWACAFTNALT). Topologically, residues 162–199 (HTVAMSTLNFCGPNEVNHFYCDLPQLFQLSCSSTQLNE) are extracellular. The helical transmembrane segment at 200–223 (LLLFAVGFIMAGTPMALIVISYIH) threads the bilayer. Residues 224–240 (VAAAVLRIRSVEGRKKA) lie on the Cytoplasmic side of the membrane. The helical transmembrane segment at 241-264 (FSTCGSHLTVVAMFYGSGIFNYMR) threads the bilayer. Topologically, residues 265–275 (LGSTKLSDKDK) are extracellular. The helical transmembrane segment at 276–295 (AVGIFNTVINPMVNPIIYRF) threads the bilayer. The Cytoplasmic segment spans residues 296-315 (RNPEVQSAIWRMLTGRRSLA).

This sequence belongs to the G-protein coupled receptor 1 family.

Its subcellular location is the cell membrane. In terms of biological role, odorant receptor. This Pan troglodytes (Chimpanzee) protein is Olfactory receptor 3A1 (OR3A1).